We begin with the raw amino-acid sequence, 238 residues long: Uridylate kinase (238 aa).

Position 12-15 (12-15 (KLSG)) interacts with ATP. Glycine 54 is a binding site for UMP. ATP-binding residues include glycine 55 and arginine 59. UMP contacts are provided by residues aspartate 74 and 135 to 142 (TGNPYFTT). 4 residues coordinate ATP: threonine 162, asparagine 163, tyrosine 168, and aspartate 171.

It belongs to the UMP kinase family. Homohexamer.

The protein localises to the cytoplasm. It catalyses the reaction UMP + ATP = UDP + ADP. The protein operates within pyrimidine metabolism; CTP biosynthesis via de novo pathway; UDP from UMP (UMPK route): step 1/1. Inhibited by UTP. Catalyzes the reversible phosphorylation of UMP to UDP. The sequence is that of Uridylate kinase from Bradyrhizobium sp. (strain BTAi1 / ATCC BAA-1182).